Here is a 1019-residue protein sequence, read N- to C-terminus: Serine/threonine-protein kinase 31 (1019 aa).

The 60-residue stretch at 78–137 (NLDPNKIYGGLFSEDQCWYRCKVLKIISVEKCLVRYIDYGNTEILNRSDIVEIPLELQFS) folds into the Tudor domain. The stretch at 298–355 (EKIKQDQKLIEENEKLKTEKDALLESYKALELKVEQIAQELQQEKAAAVDLTNHLEYT) forms a coiled coil. One can recognise a Protein kinase domain in the interval 710–1019 (IGLLKYMNSG…TRNGEANFDC (310 aa)). ATP-binding positions include 716-724 (MNSGGLLTM) and Lys737.

This sequence belongs to the protein kinase superfamily. Ser/Thr protein kinase family. As to expression, testis specific.

The catalysed reaction is L-seryl-[protein] + ATP = O-phospho-L-seryl-[protein] + ADP + H(+). The enzyme catalyses L-threonyl-[protein] + ATP = O-phospho-L-threonyl-[protein] + ADP + H(+). The polypeptide is Serine/threonine-protein kinase 31 (STK31) (Homo sapiens (Human)).